Here is a 264-residue protein sequence, read N- to C-terminus: uncharacterized protein (264 aa).

8 consecutive transmembrane segments (helical) span residues 19–39, 42–62, 69–89, 100–120, 136–156, 160–180, 192–212, and 223–243; these read LFPAVIFASLAITQIIPLPFL, YDWLLIICVLMQLWMVRSGLE, VITLFHLIGLALELFKVHMGS, IFGVPLYSGFMYASVASYLCQ, FAVVPLAAAIYLNFFTHHFSI, WWLSGLVIIVFWQTWVTYEVN, FILIGFFIWIAENIATFFGAW, and LVHLGKVSSWLLLVIVSFLIV.

The protein resides in the cell membrane. This is an uncharacterized protein from Bacillus subtilis (strain 168).